The primary structure comprises 510 residues: MTPEAAYQNLLEFQRETAYLASLGALAAWDQRTMIPKKGHEHRARQMAALARLLHQRMTDPRIGEWLEKVEGSPLVQDPLSDAAVNVREWRQAYERARAIPERLAVELAQAESEAESFWEEARPRDDWRGFLPYLKRVYALTKEKAEVLFALPPAPGDPPYGELYDALLDGYEPGMRARELLPLFAELKEGLKGLLDRILGSGKRPDTSILHRPYPVEAQRRFALELLSACGYDLEAGRLDPTAHPFEIAIGPGDVRITTRYYEDFFNAGIFGTLHEMGHALYEQGLPKEHWGTPRGDAVSLGVHESQSRTWENLVGRSLGFWERFFPRAREVFASLGDVSLEDFHFAVNAVEPSLIRVEADEVTYNLHILVRLELELALFRGELSPEDLPEAWAEKYRDHLGVAPKDYKDGVMQDVHWAGGLFGYFPTYTLGNLYAAQFFQKAEAELGPLEPRFARGEFQPFLDWTRARIHAEGSRFRPRVLVERVTGEAPSARPFLAYLEKKYAALYG.

In terms of domain architecture, Peptidase M32 spans 3 to 506; it reads PEAAYQNLLE…FLAYLEKKYA (504 aa). The HPF signature appears at 245 to 247; the sequence is HPF. Residues 255 to 259 carry the DXRXT motif; the sequence is DVRIT. H276 serves as a coordination point for Zn(2+). The short motif at 276–280 is the HEXXH element; that stretch reads HEMGH. The active-site Proton donor/acceptor is E277. H280 and E306 together coordinate Zn(2+). Residues 305–308 carry the HES/GQ motif; it reads HESQ. Positions 357–362 match the I/NRXXA/SD motif; that stretch reads IRVEAD. The GXXQDXHW motif lies at 412–419; sequence GVMQDVHW.

It belongs to the peptidase M32 family. In terms of assembly, homodimer. The cofactor is Zn(2+).

The enzyme catalyses Release of a C-terminal amino acid with broad specificity, except for -Pro.. In terms of biological role, broad specificity carboxypetidase that releases amino acids sequentially from the C-terminus, including neutral, aromatic, polar and basic residues, but not Pro. Has lower activity with substrates ending with Gly or Glu. The sequence is that of Thermostable carboxypeptidase 1 from Thermus thermophilus (strain ATCC 27634 / DSM 579 / HB8).